The chain runs to 226 residues: Oxaloacetate tautomerase FAHD2, mitochondrial (226 aa).

The transit peptide at 1–30 directs the protein to the mitochondrion; the sequence is MAAAAQRLLAASTKIVGVGRNFVAHAKELG. The Mg(2+) site is built by E69, E71, and D100.

This sequence belongs to the FAH family. The cofactor is Mg(2+). It depends on Mn(2+) as a cofactor.

It is found in the mitochondrion. The enzyme catalyses oxaloacetate = enol-oxaloacetate. Tautomerase that converts enol-oxaloacetate, a strong inhibitor of succinate dehydrogenase, to the physiological keto form of oxaloacetate. This Oryza sativa subsp. japonica (Rice) protein is Oxaloacetate tautomerase FAHD2, mitochondrial.